Consider the following 538-residue polypeptide: Putative cysteine ligase BshC (538 aa).

Residues 460–485 (KINEQIELLERMLKRNIEKKHEVELN) are a coiled coil.

This sequence belongs to the BshC family.

Functionally, involved in bacillithiol (BSH) biosynthesis. May catalyze the last step of the pathway, the addition of cysteine to glucosamine malate (GlcN-Mal) to generate BSH. The protein is Putative cysteine ligase BshC of Bacillus cereus (strain Q1).